The primary structure comprises 259 residues: Proliferating cell nuclear antigen (259 aa).

The DNA-binding element occupies 61-80 (RCDRNIALGVNLTSLTKVLR). A Glycyl lysine isopeptide (Lys-Gly) (interchain with G-Cter in SUMO); alternate cross-link involves residue Lys-164. A Glycyl lysine isopeptide (Lys-Gly) (interchain with G-Cter in ubiquitin); alternate cross-link involves residue Lys-164.

This sequence belongs to the PCNA family. In terms of assembly, homotrimer. Monoubiquitinated on Lys-164 upon DNA damage, and then polyubiquitinated through 'Lys-63'-linkage.

It is found in the nucleus. This protein is an auxiliary protein of DNA polymerase delta and is involved in the control of eukaryotic DNA replication by increasing the polymerase's processibility during elongation of the leading strand. Involved in DNA repair. In Chaetomium thermophilum (strain DSM 1495 / CBS 144.50 / IMI 039719) (Thermochaetoides thermophila), this protein is Proliferating cell nuclear antigen.